We begin with the raw amino-acid sequence, 168 residues long: Pleiotrophin (168 aa).

The signal sequence occupies residues 1–32 (MSSQQYQQQRRKFAAAFLALIFILAAVDTAEA). 5 disulfides stabilise this stretch: C47-C76, C55-C85, C62-C89, C99-C131, and C109-C141. Chondroitin sulfate binding regions lie at residues 92-99 (KKQFGAEC) and 123-131 (KRALHNADC). Residues 139 to 168 (KPCGKLTKPKPQAESKKKKKEGKKQEKMLD) are disordered. Positions 147–168 (PKPQAESKKKKKEGKKQEKMLD) are chondroitin sulfate A binding.

Belongs to the pleiotrophin family. As to quaternary structure, interacts with ALK and NEK6. Interacts with PTPRZ1 (via chondroitin sulfate groups); promotes formation of homooligomers; oligomerization impairs tyrosine phosphatase activity. Forms a complex with PTPRZ1 and CTNNB1; this complex inactivates PTPRZ1 protein tyrosine phosphatase activity through PTN interaction and stimulates tyrosine phosphorylation of CTNNB1. Interacts with ITGB3 and ITGA5. Forms a complex with PTPRZ1 and integrin alpha-V/beta-3 (ITGAV:ITGB3) that stimulates endothelial cell migration through ITGB3 'Tyr-773' phosphorylation. Interacts with SDC3 (via heparan sulfate chains); this interaction mediates the neurite outgrowth-promoting signal from PTN to the cytoskeleton of growing neurites; this interaction mediates osteoblast recruitment. Interacts with GPC2 (via heparan sulfate); this interaction promotes neurite outgrowth through binding of PTN with chondroitin sulfate of proteoglycans, thereby releasing PTPRS of chondroitin sulfate proteoglycans (CSPGs) and leading to binding with heparan sulfate of GPC2. In terms of processing, phosphorylated by NEK6. As to expression, osteoblast and brain. Expressed in the follicular epithelium and granulosa cells of the ovary. Strongly expressed in the uterus of newborn mice, and the degree of expression decreased in one-week-old mice, although the expression continues even in the uteri of adult mice. Expression gradually increases from proestrus to estrus, then decreases sharply, and thereafter gradually increased again. strongly expressed in the cochlea of WT mice 1 week after birth, and then the expression decreased and was undetectable by week 8 after birth. Expressed around the cell soma of osteocytes and apparently captured in the unmineralized interstitial matrix surrounding the cells. Furthermore distributed throughout the intraosseous canalicular porosity, being localized in the unmineralized matrix around the cell processes. Strongly expressed in the innermost layer of the periosteum.

It is found in the secreted. Secreted growth factor that mediates its signal through cell-surface proteoglycan and non-proteoglycan receptors. Binds cell-surface proteoglycan receptor via their chondroitin sulfate (CS) groups. Thereby regulates many processes like cell proliferation, cell survival, cell growth, cell differentiation and cell migration in several tissues namely neuron and bone. Also plays a role in synaptic plasticity and learning-related behavior by inhibiting long-term synaptic potentiation. Binds PTPRZ1, leading to neutralization of the negative charges of the CS chains of PTPRZ1, inducing PTPRZ1 clustering, thereby causing the dimerization and inactivation of its phosphatase activity leading to increased tyrosine phosphorylation of each of the PTPRZ1 substrates like ALK or AFAP1L2 in order to activate the PI3K-AKT pathway. Through PTPRZ1 binding controls oligodendrocyte precursor cell differentiation by enhancing the phosphorylation of AFAP1L2 in order to activate the PI3K-AKT pathway. Forms a complex with PTPRZ1 and integrin alpha-V/beta-3 (ITGAV:ITGB3) that stimulates endothelial cell migration through SRC dephosphorylation and activation that consequently leads to ITGB3 'Tyr-773' phosphorylation. In adult hippocampus promotes dendritic arborization, spine development, and functional integration and connectivity of newborn granule neurons through ALK by activating AKT signaling pathway. Binds GPC2 and chondroitin sulfate proteoglycans (CSPGs) at the neuron surface, leading to abrogation of binding between PTPRS and CSPGs and neurite outgrowth promotion. Binds SDC3 and mediates bone formation by recruiting and attaching osteoblasts/osteoblast precursors to the sites for new bone deposition. Binds ALK and promotes cell survival and cell proliferation through MAPK pathway activation. Inhibits proliferation and enhances differentiation of neural stem cells by inhibiting FGF2-induced fibroblast growth factor receptor signaling pathway. Mediates regulatory mechanisms in normal hemostasis and in hematopoietic regeneration and in maintaining the balance of myeloid and lymphoid regeneration. In addition may play a role in the female reproductive system, auditory response and the progesterone-induced decidualization pathway. In Mus musculus (Mouse), this protein is Pleiotrophin.